Consider the following 648-residue polypeptide: Biosynthetic arginine decarboxylase (648 aa).

K109 bears the N6-(pyridoxal phosphate)lysine mark. A substrate-binding site is contributed by I291–F301.

The protein belongs to the Orn/Lys/Arg decarboxylase class-II family. SpeA subfamily. The cofactor is Mg(2+). Pyridoxal 5'-phosphate is required as a cofactor.

It catalyses the reaction L-arginine + H(+) = agmatine + CO2. It functions in the pathway amine and polyamine biosynthesis; agmatine biosynthesis; agmatine from L-arginine: step 1/1. Its function is as follows. Catalyzes the biosynthesis of agmatine from arginine. The chain is Biosynthetic arginine decarboxylase from Prochlorococcus marinus (strain MIT 9515).